Here is a 323-residue protein sequence, read N- to C-terminus: Phospho-N-acetylmuramoyl-pentapeptide-transferase (323 aa).

The next 9 membrane-spanning stretches (helical) occupy residues 3-23 (NILLPLLGGFIITAAFMPALI), 52-72 (MGGLLFIVAIAVMTLLTSWVL), 77-97 (MLPTTWILIFILVLYGALGMW), 121-141 (IVGALILFWVYTHEQLPMALH), 145-165 (IGNWHMSGWYAVFVILWLVGF), 175-195 (LDGLVSGLASIAFAAYGIVAW), 200-220 (INIAIFCFAVVGSLLGFLIFN), 226-248 (IFMGDTGSLALGGALAAVSILLH), and 301-321 (IDLTFWGIGLVTALSGVWVIL).

This sequence belongs to the glycosyltransferase 4 family. MraY subfamily. The cofactor is Mg(2+).

Its subcellular location is the cell membrane. The enzyme catalyses UDP-N-acetyl-alpha-D-muramoyl-L-alanyl-gamma-D-glutamyl-L-lysyl-D-alanyl-D-alanine + di-trans,octa-cis-undecaprenyl phosphate = Mur2Ac(oyl-L-Ala-gamma-D-Glu-L-Lys-D-Ala-D-Ala)-di-trans,octa-cis-undecaprenyl diphosphate + UMP. Its pathway is cell wall biogenesis; peptidoglycan biosynthesis. Catalyzes the initial step of the lipid cycle reactions in the biosynthesis of the cell wall peptidoglycan: transfers peptidoglycan precursor phospho-MurNAc-pentapeptide from UDP-MurNAc-pentapeptide onto the lipid carrier undecaprenyl phosphate, yielding undecaprenyl-pyrophosphoryl-MurNAc-pentapeptide, known as lipid I. The chain is Phospho-N-acetylmuramoyl-pentapeptide-transferase from Levilactobacillus brevis (strain ATCC 367 / BCRC 12310 / CIP 105137 / JCM 1170 / LMG 11437 / NCIMB 947 / NCTC 947) (Lactobacillus brevis).